A 377-amino-acid polypeptide reads, in one-letter code: Queuine tRNA-ribosyltransferase (377 aa).

Residue Asp92 is the Proton acceptor of the active site. Substrate-binding positions include 92–96, Asp146, Gln190, and Gly217; that span reads DSGGF. The interval 248-254 is RNA binding; that stretch reads GVGRPED. The Nucleophile role is filled by Asp267. The segment at 272–276 is RNA binding; important for wobble base 34 recognition; the sequence is TRHAR. Residues Cys305, Cys307, Cys310, and His337 each contribute to the Zn(2+) site.

The protein belongs to the queuine tRNA-ribosyltransferase family. In terms of assembly, homodimer. Within each dimer, one monomer is responsible for RNA recognition and catalysis, while the other monomer binds to the replacement base PreQ1. Zn(2+) is required as a cofactor.

The enzyme catalyses 7-aminomethyl-7-carbaguanine + guanosine(34) in tRNA = 7-aminomethyl-7-carbaguanosine(34) in tRNA + guanine. The protein operates within tRNA modification; tRNA-queuosine biosynthesis. Functionally, catalyzes the base-exchange of a guanine (G) residue with the queuine precursor 7-aminomethyl-7-deazaguanine (PreQ1) at position 34 (anticodon wobble position) in tRNAs with GU(N) anticodons (tRNA-Asp, -Asn, -His and -Tyr). Catalysis occurs through a double-displacement mechanism. The nucleophile active site attacks the C1' of nucleotide 34 to detach the guanine base from the RNA, forming a covalent enzyme-RNA intermediate. The proton acceptor active site deprotonates the incoming PreQ1, allowing a nucleophilic attack on the C1' of the ribose to form the product. After dissociation, two additional enzymatic reactions on the tRNA convert PreQ1 to queuine (Q), resulting in the hypermodified nucleoside queuosine (7-(((4,5-cis-dihydroxy-2-cyclopenten-1-yl)amino)methyl)-7-deazaguanosine). The chain is Queuine tRNA-ribosyltransferase from Xylella fastidiosa (strain Temecula1 / ATCC 700964).